The primary structure comprises 221 residues: Proteasome subunit beta type-1 (221 aa).

The protein belongs to the peptidase T1B family. The 26S proteasome consists of a 20S proteasome core and two 19S regulatory subunits. The 20S proteasome core is composed of 28 subunits that are arranged in four stacked rings, resulting in a barrel-shaped structure. The two end rings are each formed by seven alpha subunits, and the two central rings are each formed by seven beta subunits. The catalytic chamber with the active sites is on the inside of the barrel.

Its subcellular location is the cytoplasm. It localises to the nucleus. Non-catalytic component of the proteasome, a multicatalytic proteinase complex which is characterized by its ability to cleave peptides with Arg, Phe, Tyr, Leu, and Glu adjacent to the leaving group at neutral or slightly basic pH. The proteasome has an ATP-dependent proteolytic activity. This is Proteasome subunit beta type-1 (PBF1) from Oryza sativa subsp. japonica (Rice).